The following is a 458-amino-acid chain: DNA repair protein RadA (458 aa).

A C4-type zinc finger spans residues cysteine 11–cysteine 28. An ATP-binding site is contributed by glycine 100–serine 107. A RadA KNRFG motif motif is present at residues lysine 256–glycine 260. Residues aspartate 355–leucine 458 form a lon-protease-like region.

Belongs to the RecA family. RadA subfamily.

DNA-dependent ATPase involved in processing of recombination intermediates, plays a role in repairing DNA breaks. Stimulates the branch migration of RecA-mediated strand transfer reactions, allowing the 3' invading strand to extend heteroduplex DNA faster. Binds ssDNA in the presence of ADP but not other nucleotides, has ATPase activity that is stimulated by ssDNA and various branched DNA structures, but inhibited by SSB. Does not have RecA's homology-searching function. The polypeptide is DNA repair protein RadA (Haemophilus influenzae (strain ATCC 51907 / DSM 11121 / KW20 / Rd)).